We begin with the raw amino-acid sequence, 102 residues long: Large ribosomal subunit protein uL24 (102 aa).

Residues 44-65 (HAKPSQDNPQGGILNQEAPIHS) are disordered.

The protein belongs to the universal ribosomal protein uL24 family. In terms of assembly, part of the 50S ribosomal subunit.

In terms of biological role, one of two assembly initiator proteins, it binds directly to the 5'-end of the 23S rRNA, where it nucleates assembly of the 50S subunit. One of the proteins that surrounds the polypeptide exit tunnel on the outside of the subunit. The chain is Large ribosomal subunit protein uL24 from Shouchella clausii (strain KSM-K16) (Alkalihalobacillus clausii).